The primary structure comprises 405 residues: Acetate kinase (405 aa).

N7 serves as a coordination point for Mg(2+). ATP is bound at residue K14. Residue R99 coordinates substrate. D156 acts as the Proton donor/acceptor in catalysis. 215-219 (HLGNG) is an ATP binding site. Position 391 (E391) interacts with Mg(2+).

The protein belongs to the acetokinase family. In terms of assembly, homodimer. Mg(2+) is required as a cofactor. Requires Mn(2+) as cofactor.

It is found in the cytoplasm. The catalysed reaction is acetate + ATP = acetyl phosphate + ADP. The protein operates within metabolic intermediate biosynthesis; acetyl-CoA biosynthesis; acetyl-CoA from acetate: step 1/2. Its function is as follows. Catalyzes the formation of acetyl phosphate from acetate and ATP. Can also catalyze the reverse reaction. The chain is Acetate kinase from Nostoc sp. (strain PCC 7120 / SAG 25.82 / UTEX 2576).